We begin with the raw amino-acid sequence, 1761 residues long: Laminin subunit beta-4 (1761 aa).

Positions 1 to 19 (MQFQLTLFLHLGWLSYSKA) are cleaved as a signal peptide. The region spanning 24 to 264 (NRGACHPTTG…ALYEMIVRGS (241 aa)) is the Laminin N-terminal domain. 3 N-linked (GlcNAc...) asparagine glycosylation sites follow: asparagine 169, asparagine 229, and asparagine 246. 19 cysteine pairs are disulfide-bonded: cysteine 265/cysteine 274, cysteine 267/cysteine 295, cysteine 297/cysteine 306, cysteine 309/cysteine 329, cysteine 332/cysteine 341, cysteine 334/cysteine 359, cysteine 362/cysteine 371, cysteine 374/cysteine 392, cysteine 395/cysteine 408, cysteine 397/cysteine 423, cysteine 425/cysteine 434, cysteine 437/cysteine 452, cysteine 455/cysteine 468, cysteine 457/cysteine 475, cysteine 477/cysteine 486, cysteine 489/cysteine 503, cysteine 506/cysteine 518, cysteine 508/cysteine 525, and cysteine 527/cysteine 536. Laminin EGF-like domains follow at residues 265–331 (CFCN…ACRS), 332–394 (CSCN…ACIP), 395–454 (CECD…GCQP), and 455–505 (CDCN…GCSP). The Laminin EGF-like 5; truncated domain occupies 506–552 (CDCDIGGAYSNVCSPKNGQCECRPHVTGRSCSEPAPGYFFAPLNFYL). The Laminin IV type B domain occupies 545–763 (FAPLNFYLYE…LIISMSAKLH (219 aa)). 31 disulfides stabilise this stretch: cysteine 769–cysteine 781, cysteine 771–cysteine 788, cysteine 790–cysteine 799, cysteine 802–cysteine 814, cysteine 817–cysteine 829, cysteine 819–cysteine 836, cysteine 838–cysteine 847, cysteine 850–cysteine 860, cysteine 863–cysteine 872, cysteine 865–cysteine 879, cysteine 882–cysteine 891, cysteine 894–cysteine 908, cysteine 913–cysteine 938, cysteine 940–cysteine 949, cysteine 952–cysteine 967, cysteine 970–cysteine 984, cysteine 972–cysteine 991, cysteine 994–cysteine 1003, cysteine 1006–cysteine 1019, cysteine 1022–cysteine 1043, cysteine 1024–cysteine 1050, cysteine 1052–cysteine 1061, cysteine 1064–cysteine 1077, cysteine 1080–cysteine 1092, cysteine 1082–cysteine 1099, cysteine 1101–cysteine 1110, cysteine 1113–cysteine 1125, cysteine 1128–cysteine 1140, cysteine 1130–cysteine 1147, cysteine 1149–cysteine 1158, and cysteine 1161–cysteine 1172. Laminin EGF-like domains lie at 769 to 816 (CKCH…GCHP), 817 to 862 (CHCH…SCHP), 863 to 910 (CPCN…PCRP), 911 to 969 (CLCP…PCQP), 970 to 1021 (CACN…TCRR), 1022 to 1079 (CSCH…GCQS), 1080 to 1127 (CDCD…RCIP), and 1128 to 1174 (CDCN…TCLQ). N-linked (GlcNAc...) asparagine glycosylation occurs at asparagine 1016. N-linked (GlcNAc...) asparagine glycosylation occurs at asparagine 1055. The domain II stretch occupies residues 1175-1375 (CHLCFDQWDH…PDIQILNEKV (201 aa)). Asparagine 1223, asparagine 1301, asparagine 1326, asparagine 1333, and asparagine 1354 each carry an N-linked (GlcNAc...) asparagine glycan. The stretch at 1243-1301 (KVKDYHDSVRRQIMQLNEQLKAVYEFQDLKDTIERAKNEADLLLEDLQEEIDLQSSVLN) forms a coiled coil. Positions 1376 to 1408 (CGDPGNVPCVPLPCGGALCTGRKGHRKCRGPGC) are domain alpha. The domain I stretch occupies residues 1409–1761 (HGSLTLSTNA…QEKKYARCYS (353 aa)). A coiled-coil region spans residues 1416–1480 (TNALQKAQEA…SDSEEENINL (65 aa)). N-linked (GlcNAc...) asparagine glycans are attached at residues asparagine 1469, asparagine 1517, asparagine 1587, asparagine 1596, asparagine 1609, and asparagine 1725. The stretch at 1525-1759 (IQKHMQLCED…VEQEKKYARC (235 aa)) forms a coiled coil.

Laminin is a complex glycoprotein, consisting of three different polypeptide chains (alpha, beta, gamma), which are bound to each other by disulfide bonds into a cross-shaped molecule comprising one long and three short arms with globules at each end.

The protein resides in the secreted. The protein localises to the extracellular space. Its subcellular location is the extracellular matrix. It is found in the basement membrane. Binding to cells via a high affinity receptor, laminin is thought to mediate the attachment, migration and organization of cells into tissues during embryonic development by interacting with other extracellular matrix components. This Homo sapiens (Human) protein is Laminin subunit beta-4 (LAMB4).